A 171-amino-acid polypeptide reads, in one-letter code: Small ribosomal subunit protein uS13 (171 aa).

2 disordered regions span residues Met-1–Lys-22 and Arg-142–Glu-171. Residues Lys-10–Lys-22 are compositionally biased toward basic and acidic residues. Positions Arg-142–Gly-158 are enriched in basic residues.

Belongs to the universal ribosomal protein uS13 family. In terms of assembly, part of the 30S ribosomal subunit. Forms a loose heterodimer with protein S19. Forms two bridges to the 50S subunit in the 70S ribosome.

Functionally, located at the top of the head of the 30S subunit, it contacts several helices of the 16S rRNA. In the 70S ribosome it contacts the 23S rRNA (bridge B1a) and protein L5 of the 50S subunit (bridge B1b), connecting the 2 subunits; these bridges are implicated in subunit movement. The sequence is that of Small ribosomal subunit protein uS13 from Thermoplasma volcanium (strain ATCC 51530 / DSM 4299 / JCM 9571 / NBRC 15438 / GSS1).